The sequence spans 345 residues: Phosphoribosylformylglycinamidine cyclo-ligase (345 aa).

This sequence belongs to the AIR synthase family.

It localises to the cytoplasm. The enzyme catalyses 2-formamido-N(1)-(5-O-phospho-beta-D-ribosyl)acetamidine + ATP = 5-amino-1-(5-phospho-beta-D-ribosyl)imidazole + ADP + phosphate + H(+). The protein operates within purine metabolism; IMP biosynthesis via de novo pathway; 5-amino-1-(5-phospho-D-ribosyl)imidazole from N(2)-formyl-N(1)-(5-phospho-D-ribosyl)glycinamide: step 2/2. This chain is Phosphoribosylformylglycinamidine cyclo-ligase, found in Escherichia coli O139:H28 (strain E24377A / ETEC).